The primary structure comprises 220 residues: MRLRNKPWARDAIAQNPDLVIQQPATWKGNWHRCFGRQAPLYIEVGTGKGQFLTGMAKHHPEINFIGIERYESVLVTAMERAKEAELTNLKFLSEDVYDLLDFFADGEVSRLFINFTDPWPKKRHEKRRLTYKDFLAKYEIVLKEKGDIHFKTDNQGLFEYSLHSFSKYGMILHNVSLDLHNSDFEGNIKTEYEEKFAKKGMRIYRCEAQFRTNEESHNL.

4 residues coordinate S-adenosyl-L-methionine: Glu-44, Glu-69, Asp-96, and Asp-118. Residue Asp-118 is part of the active site. Lys-122 serves as a coordination point for substrate. The tract at residues 124–129 is interaction with RNA; the sequence is RHEKRR. Residues Asp-154 and 191-194 each bind substrate; that span reads TEYE.

The protein belongs to the class I-like SAM-binding methyltransferase superfamily. TrmB family.

It catalyses the reaction guanosine(46) in tRNA + S-adenosyl-L-methionine = N(7)-methylguanosine(46) in tRNA + S-adenosyl-L-homocysteine. Its pathway is tRNA modification; N(7)-methylguanine-tRNA biosynthesis. Functionally, catalyzes the formation of N(7)-methylguanine at position 46 (m7G46) in tRNA. This chain is tRNA (guanine-N(7)-)-methyltransferase, found in Halalkalibacterium halodurans (strain ATCC BAA-125 / DSM 18197 / FERM 7344 / JCM 9153 / C-125) (Bacillus halodurans).